The primary structure comprises 1179 residues: RecBCD enzyme subunit RecB (1179 aa).

Residues 1–859 (MVYSDTKTSK…IIQNGKCMNY (859 aa)) form a DNA-binding and helicase activity, interacts with RecC region. The UvrD-like helicase ATP-binding domain maps to 18-459 (NIMKKKLNIF…YYLDTNWRSS (442 aa)). 39–46 (ASAGTGKT) is an ATP binding site. The 271-residue stretch at 485–755 (EPILSSSKNL…RIITIHKSKG (271 aa)) folds into the UvrD-like helicase C-terminal domain. Residues 910-1179 (YSQITSFTKI…KLTKLILQKK (270 aa)) form a nuclease activity, interacts with RecD and RecA region. The Mg(2+) site is built by His-962, Asp-1073, and Asp-1086. Asp-1086 functions as the For nuclease activity in the catalytic mechanism.

This sequence belongs to the helicase family. UvrD subfamily. In terms of assembly, heterotrimer of RecB, RecC and RecD. All subunits contribute to DNA-binding. Interacts with RecA. Mg(2+) is required as a cofactor.

It carries out the reaction Exonucleolytic cleavage (in the presence of ATP) in either 5'- to 3'- or 3'- to 5'-direction to yield 5'-phosphooligonucleotides.. It catalyses the reaction Couples ATP hydrolysis with the unwinding of duplex DNA by translocating in the 3'-5' direction.. The catalysed reaction is ATP + H2O = ADP + phosphate + H(+). Its function is as follows. A helicase/nuclease that prepares dsDNA breaks (DSB) for recombinational DNA repair. Binds to DSBs and unwinds DNA via a highly rapid and processive ATP-dependent bidirectional helicase activity. Unwinds dsDNA until it encounters a Chi (crossover hotspot instigator) sequence from the 3' direction. Cuts ssDNA a few nucleotides 3' to the Chi site. The properties and activities of the enzyme are changed at Chi. The Chi-altered holoenzyme produces a long 3'-ssDNA overhang and facilitates RecA-binding to the ssDNA for homologous DNA recombination and repair. Holoenzyme degrades any linearized DNA that is unable to undergo homologous recombination. In the holoenzyme this subunit contributes ATPase, 3'-5' helicase, exonuclease activity and loads RecA onto ssDNA. The protein is RecBCD enzyme subunit RecB of Buchnera aphidicola subsp. Schizaphis graminum (strain Sg).